The following is a 428-amino-acid chain: GTPase HflX (428 aa).

Residues 214–374 (PVVAIVGYTN…AIERELFKET (161 aa)) form the Hflx-type G domain. Residues 220–227 (GYTNAGKS), 245–249 (FATLD), 267–270 (DTVG), 333–336 (NKID), and 352–354 (SAK) each bind GTP. Residues Ser227 and Thr247 each coordinate Mg(2+).

Belongs to the TRAFAC class OBG-HflX-like GTPase superfamily. HflX GTPase family. As to quaternary structure, monomer. Associates with the 50S ribosomal subunit. Requires Mg(2+) as cofactor.

The protein localises to the cytoplasm. Functionally, GTPase that associates with the 50S ribosomal subunit and may have a role during protein synthesis or ribosome biogenesis. This is GTPase HflX from Caldanaerobacter subterraneus subsp. tengcongensis (strain DSM 15242 / JCM 11007 / NBRC 100824 / MB4) (Thermoanaerobacter tengcongensis).